A 309-amino-acid polypeptide reads, in one-letter code: MKKENQSFNLDFILLGVTSQQEQNNVFFVIFLCIYPITLTGNLLIILAICADIRLHNPMYFLLANLSLVDIIFSSVTIPKVLANHLLGSKFISFGGCLMQMYFMIALAKADSYTLAAMAYDRAVAISCPLHYTTIMSPRSCILLIAGSWVIGNTSALPHTLLTASLSFCGNQEVANFYCDIMPLLKLSCSDVHFNVKMMYLGVGVFSLPLLCIIVSYVQVFSTVFQVPSTKSLFKAFCTCGSHLTVVFLYYGTTMGMYFRPLTSYSPKDAVITVMYVAVTPALNPFIYSLRNWDMKAALQKLFSKRISS.

Topologically, residues Met1–Asn25 are extracellular. N-linked (GlcNAc...) asparagine glycosylation is present at Asn5. A helical transmembrane segment spans residues Val26–Ile49. Residues Cys50–Asn57 are Cytoplasmic-facing. Residues Pro58–Pro79 form a helical membrane-spanning segment. At Lys80–Gln100 the chain is on the extracellular side. Cys97 and Cys189 are disulfide-bonded. A helical membrane pass occupies residues Met101–Tyr120. Residues Asp121–Arg139 are Cytoplasmic-facing. Residues Ser140–Pro158 traverse the membrane as a helical segment. The Extracellular segment spans residues His159–Asn195. A helical membrane pass occupies residues Val196–Val218. At Gln219–Lys235 the chain is on the cytoplasmic side. Residues Ala236 to Tyr258 form a helical membrane-spanning segment. At Phe259–Ala270 the chain is on the extracellular side. A helical membrane pass occupies residues Val271–Leu290. The Cytoplasmic segment spans residues Arg291–Ser309.

Belongs to the G-protein coupled receptor 1 family.

It localises to the cell membrane. Odorant receptor. In Homo sapiens (Human), this protein is Olfactory receptor 1A2 (OR1A2).